A 658-amino-acid polypeptide reads, in one-letter code: Glycine--tRNA ligase beta subunit (658 aa).

The protein belongs to the class-II aminoacyl-tRNA synthetase family. Tetramer of two alpha and two beta subunits.

It localises to the cytoplasm. The enzyme catalyses tRNA(Gly) + glycine + ATP = glycyl-tRNA(Gly) + AMP + diphosphate. The protein is Glycine--tRNA ligase beta subunit of Rickettsia bellii (strain OSU 85-389).